The following is a 120-amino-acid chain: Glycine cleavage system H protein (120 aa).

The 83-residue stretch at 17–99 folds into the Lipoyl-binding domain; it reads VATVGITNYA…QGAGWFFKLK (83 aa). Lys-58 is subject to N6-lipoyllysine.

The protein belongs to the GcvH family. As to quaternary structure, the glycine cleavage system is composed of four proteins: P, T, L and H. (R)-lipoate serves as cofactor.

In terms of biological role, the glycine cleavage system catalyzes the degradation of glycine. The H protein shuttles the methylamine group of glycine from the P protein to the T protein. In Rhizobium etli (strain ATCC 51251 / DSM 11541 / JCM 21823 / NBRC 15573 / CFN 42), this protein is Glycine cleavage system H protein.